A 361-amino-acid chain; its full sequence is POU domain, class 3, transcription factor 4-A (361 aa).

Disordered regions lie at residues 100–131 (HVNH…GQPI), 150–189 (LTPP…EETP), and 333–361 (EKRM…CNEL). The segment covering 119–131 (AHNSSLTSSGQPI) has biased composition (polar residues). Residues 165–183 (VLREPNDHVDLGSHHCQDH) are compositionally biased toward basic and acidic residues. Residues 186-260 (EETPTSDELE…LLNKWLEEAD (75 aa)) form the POU-specific domain. The segment at residues 278–337 (KRKKRTSIEVSVKGVLETHFLKCPKPAALEITSLADSLQLEKEVVRVWFCNRRQKEKRMT) is a DNA-binding region (homeobox).

The protein belongs to the POU transcription factor family. Class-3 subfamily. As to expression, from embryonic stage 10, expressed in the Spemann's organizer. During gastrulation, expressed in both the involuting mesoderm and the overlying neuroectoderm. During the neural plate and neural fold stages, expressed in the entire neuroectoderm with expression in discrete regions of the developing nervous system persisting at later stages. Transiently expressed in the pronephros from stages 24-32. In adults, expressed in the kidney and brain.

The protein resides in the nucleus. Transcriptional activator. Induces neural-specific gene expression to act as a key regulator of neural differentiation. The protein is POU domain, class 3, transcription factor 4-A (pou3f4-a) of Xenopus laevis (African clawed frog).